A 503-amino-acid chain; its full sequence is UDP-N-acetylmuramate--L-alanine ligase (503 aa).

Residues 1–22 (MIKQTHVSNSSNNSTNSTAAQV) form a disordered region. The span at 8–18 (SNSSNNSTNST) shows a compositional bias: low complexity. Residue 135 to 141 (GTHGKTT) participates in ATP binding.

The protein belongs to the MurCDEF family.

It localises to the cytoplasm. The catalysed reaction is UDP-N-acetyl-alpha-D-muramate + L-alanine + ATP = UDP-N-acetyl-alpha-D-muramoyl-L-alanine + ADP + phosphate + H(+). It participates in cell wall biogenesis; peptidoglycan biosynthesis. Functionally, cell wall formation. The chain is UDP-N-acetylmuramate--L-alanine ligase from Colwellia psychrerythraea (strain 34H / ATCC BAA-681) (Vibrio psychroerythus).